Consider the following 37-residue polypeptide: uncharacterized protein (37 aa).

The segment at 1-37 (MGQVEKARQGQFARPHHSDSQRRVRAWSRIQRRARSF) is disordered. Positions 23–37 (RVRAWSRIQRRARSF) are enriched in basic residues.

This is an uncharacterized protein from Bacillus phage phi105 (Bacteriophage phi-105).